The following is a 67-amino-acid chain: Large ribosomal subunit protein bL35 (67 aa).

Positions 1 to 16 (MPKMKTKSGAKKRFRV) are enriched in basic residues. Residues 1 to 24 (MPKMKTKSGAKKRFRVRPGGTVKR) form a disordered region.

It belongs to the bacterial ribosomal protein bL35 family.

The chain is Large ribosomal subunit protein bL35 from Polaromonas naphthalenivorans (strain CJ2).